The sequence spans 58 residues: Large ribosomal subunit protein uL24 (58 aa).

This sequence belongs to the universal ribosomal protein uL24 family. As to quaternary structure, part of the 50S ribosomal subunit.

One of two assembly initiator proteins, it binds directly to the 5'-end of the 23S rRNA, where it nucleates assembly of the 50S subunit. In terms of biological role, one of the proteins that surrounds the polypeptide exit tunnel on the outside of the subunit. The polypeptide is Large ribosomal subunit protein uL24 (rplX) (Spiroplasma citri).